Here is a 588-residue protein sequence, read N- to C-terminus: Protein disulfide-isomerase-like protein of the testis (588 aa).

The N-terminal stretch at 1-20 is a signal peptide; sequence MELLWTPLLLVAACLSEVLG. N-linked (GlcNAc...) asparagine glycosylation is found at asparagine 55, asparagine 157, and asparagine 337. Positions 385 to 448 constitute a Thioredoxin domain; the sequence is PVKKLVGKNF…IAKIDITAND (64 aa). Basic and acidic residues-rich tracts occupy residues 531–542, 549–567, and 574–588; these read IEDTSKQDRPVK, SIRKPEEPERRKETAEREA, and EQPKPERKLEVKEEL. The tract at residues 531–588 is disordered; sequence IEDTSKQDRPVKESPVLDSIRKPEEPERRKETAEREAAAAQPKEQPKPERKLEVKEEL. Residues 585–588 carry the Prevents secretion from ER motif; it reads KEEL.

It belongs to the protein disulfide isomerase family. In terms of assembly, homodimer. The homodimer is not disulfide-linked. Interacts with CLGN and ERO1A. Post-translationally, N-glycosylated. Testis-specific (at protein level).

It is found in the endoplasmic reticulum. Probable redox-inactive chaperone involved in spermatogenesis. The protein is Protein disulfide-isomerase-like protein of the testis (Pdilt) of Mus musculus (Mouse).